The primary structure comprises 490 residues: Cysteine desulfurase, mitochondrial (490 aa).

Pyridoxal 5'-phosphate-binding positions include 161 to 162, Asn241, Gln269, and 289 to 291; these read AT and SSH. At Lys292 the chain carries N6-(pyridoxal phosphate)lysine. Residue Thr329 participates in pyridoxal 5'-phosphate binding. The active-site Cysteine persulfide intermediate is the Cys414. A [2Fe-2S] cluster-binding site is contributed by Cys414.

Belongs to the class-V pyridoxal-phosphate-dependent aminotransferase family. NifS/IscS subfamily. The cofactor is pyridoxal 5'-phosphate.

It is found in the mitochondrion. The catalysed reaction is (sulfur carrier)-H + L-cysteine = (sulfur carrier)-SH + L-alanine. Functionally, catalyzes the removal of elemental sulfur from cysteine to produce alanine. It supplies the inorganic sulfur for iron-sulfur (Fe-S) clusters. Plays a role in both tRNA-processing and mitochondrial metabolism. Involved in the 2-thio-modification of both 5-carboxymethylaminomethyl-2-thiouridine in mitochondrial tRNAs and 5-methoxycarbonylmethyl-2-thiouridine (mcm5s2U) in cytoplasmic tRNAs. This is Cysteine desulfurase, mitochondrial from Eremothecium gossypii (strain ATCC 10895 / CBS 109.51 / FGSC 9923 / NRRL Y-1056) (Yeast).